The sequence spans 688 residues: Acyl-CoA synthetase short-chain family member B, mitochondrial (688 aa).

This sequence belongs to the ATP-dependent AMP-binding enzyme family.

The protein resides in the mitochondrion. The enzyme catalyses acetate + ATP + CoA = acetyl-CoA + AMP + diphosphate. Activates acetate so that it can be used for lipid synthesis or for energy generation. In Dictyostelium discoideum (Social amoeba), this protein is Acyl-CoA synthetase short-chain family member B, mitochondrial (aslB).